The primary structure comprises 215 residues: Redox-sensing transcriptional repressor Rex (215 aa).

Residues 18-57 constitute a DNA-binding region (H-T-H motif); it reads LYYRFLKNLHASGKQRVSSAELSDAVKVDSATIRRDFSYF. 92–97 contributes to the NAD(+) binding site; the sequence is GVGNLG.

Belongs to the transcriptional regulatory Rex family. In terms of assembly, homodimer.

It localises to the cytoplasm. Functionally, modulates transcription in response to changes in cellular NADH/NAD(+) redox state. This is Redox-sensing transcriptional repressor Rex from Bacillus subtilis (strain 168).